Reading from the N-terminus, the 690-residue chain is Methionine--tRNA ligase (690 aa).

The short motif at P20–H30 is the 'HIGH' region element. Positions 151, 154, 164, and 167 each coordinate Zn(2+). A 'KMSKS' region motif is present at residues K337–S341. K340 contacts ATP. Residues D589–M690 enclose the tRNA-binding domain.

The protein belongs to the class-I aminoacyl-tRNA synthetase family. MetG type 1 subfamily. In terms of assembly, homodimer. Zn(2+) serves as cofactor.

Its subcellular location is the cytoplasm. It catalyses the reaction tRNA(Met) + L-methionine + ATP = L-methionyl-tRNA(Met) + AMP + diphosphate. Functionally, is required not only for elongation of protein synthesis but also for the initiation of all mRNA translation through initiator tRNA(fMet) aminoacylation. In Vibrio vulnificus (strain YJ016), this protein is Methionine--tRNA ligase.